Here is a 207-residue protein sequence, read N- to C-terminus: Uracil phosphoribosyltransferase (207 aa).

5-phospho-alpha-D-ribose 1-diphosphate is bound by residues R77, R102, and 129-137; that span reads DPMLATGGS. Uracil is bound by residues I192 and 197-199; that span reads GDA. 5-phospho-alpha-D-ribose 1-diphosphate is bound at residue D198.

The protein belongs to the UPRTase family. Mg(2+) serves as cofactor.

The enzyme catalyses UMP + diphosphate = 5-phospho-alpha-D-ribose 1-diphosphate + uracil. Its pathway is pyrimidine metabolism; UMP biosynthesis via salvage pathway; UMP from uracil: step 1/1. Its activity is regulated as follows. Allosterically activated by GTP. Its function is as follows. Catalyzes the conversion of uracil and 5-phospho-alpha-D-ribose 1-diphosphate (PRPP) to UMP and diphosphate. This chain is Uracil phosphoribosyltransferase, found in Mycobacterium marinum (strain ATCC BAA-535 / M).